The following is a 548-amino-acid chain: Multidrug efflux system permease protein Rv1217c (548 aa).

12 consecutive transmembrane segments (helical) span residues 39–59 (VSLP…YIAS), 99–119 (GIWK…LTVI), 148–168 (ALLL…LGLL), 178–198 (VAFG…AAVA), 210–230 (AVAF…DAGS), 253–273 (WWVL…AYRL), 313–333 (LLWT…VHGI), 359–379 (AFLA…AVSL), 410–430 (LAMA…AAGL), 450–470 (AAVQ…LFGL), 477–497 (VAWG…LAGF), and 521–541 (VPLL…AMAF).

As to quaternary structure, the complex is probably composed of two ATP-binding proteins (Rv1218c) and a transmembrane protein (Rv1217c).

The protein resides in the cell inner membrane. Its function is as follows. Probably part of the ABC transporter complex Rv1217c-Rv1218c involved in the resistance to a wide range of structurally unrelated drugs. Probably responsible for the translocation of the substrate across the membrane. The protein is Multidrug efflux system permease protein Rv1217c of Mycobacterium tuberculosis (strain ATCC 25618 / H37Rv).